Reading from the N-terminus, the 249-residue chain is Isoprenyl transferase (249 aa).

D25 is a catalytic residue. D25 contacts Mg(2+). Residues 26–29 (GNGR), W30, R38, H42, and 70–72 (STE) contribute to the substrate site. The Proton acceptor role is filled by N73. Substrate is bound by residues W74, R76, R197, and 203–205 (RLS). E216 is a Mg(2+) binding site.

This sequence belongs to the UPP synthase family. Homodimer. Mg(2+) serves as cofactor.

Catalyzes the condensation of isopentenyl diphosphate (IPP) with allylic pyrophosphates generating different type of terpenoids. This chain is Isoprenyl transferase, found in Streptococcus pyogenes serotype M1.